Reading from the N-terminus, the 1037-residue chain is Outer dynein arm-docking complex subunit 2 (1037 aa).

Composition is skewed to basic and acidic residues over residues Glu-316 to His-334 and Ser-376 to Lys-391. 2 disordered regions span residues Glu-316 to Ser-353 and Ser-376 to Asp-439. ARM repeat units lie at residues Glu-477 to His-516, Pro-518 to Lys-557, Gly-528 to Gly-570, His-615 to Ser-654, Glu-656 to Glu-695, Lys-739 to Gln-778, Pro-821 to Glu-860, Asp-864 to Lys-903, Gln-905 to Met-944, and Gly-946 to Glu-985. Position 545 is an N6-methyllysine (Lys-545).

In terms of assembly, component of the outer dynein arm-docking complex along with ODAD1, ODAD3, and ODAD4. Interacts with CFAP61. Highly expressed in testis. In males, also detected at lower levels in lung, brain, liver and muscle. In females, detected in ovary.

It is found in the cytoplasm. The protein resides in the cytoskeleton. Its subcellular location is the cilium axoneme. The protein localises to the cilium basal body. Functionally, component of the outer dynein arm-docking complex (ODA-DC) that mediates outer dynein arms (ODA) binding onto the doublet microtubule. Involved in mediating assembly of both ODAs and their axonemal docking complex onto ciliary microtubules. The chain is Outer dynein arm-docking complex subunit 2 from Mus musculus (Mouse).